Consider the following 302-residue polypeptide: Putative peptide permease protein BRA0407/BS1330_II0404 (302 aa).

Residues 1 to 22 form a disordered region; that stretch reads MRSSIHASRLRKMGQSIPASTG. The next 6 membrane-spanning stretches (helical) occupy residues 38-58, 101-121, 147-167, 200-222, 230-250, and 268-288; these read IFGL…PLWL, LLVA…IGAI, IFLL…VVVI, AGLG…VVYA, ILLE…AASW, and WQWL…NFIG. The ABC transmembrane type-1 domain maps to 97 to 288; it reads GRISLLVAVS…LAVLAINFIG (192 aa).

Belongs to the binding-protein-dependent transport system permease family. As to quaternary structure, the complex is composed of two ATP-binding proteins (BRA0404 and BRA0405), two transmembrane proteins (BRA0407 and BRA0408) and a solute-binding protein (BRA0409).

The protein localises to the cell inner membrane. Functionally, probably part of an ABC transporter complex that could be involved in peptide import. Probably responsible for the translocation of the substrate across the membrane. This is Putative peptide permease protein BRA0407/BS1330_II0404 from Brucella suis biovar 1 (strain 1330).